The sequence spans 295 residues: 4-diphosphocytidyl-2-C-methyl-D-erythritol kinase (295 aa).

Lys-22 is an active-site residue. An ATP-binding site is contributed by 106–116 (PAGGGFGGGSS). Residue Asp-148 is part of the active site.

Belongs to the GHMP kinase family. IspE subfamily.

The enzyme catalyses 4-CDP-2-C-methyl-D-erythritol + ATP = 4-CDP-2-C-methyl-D-erythritol 2-phosphate + ADP + H(+). The protein operates within isoprenoid biosynthesis; isopentenyl diphosphate biosynthesis via DXP pathway; isopentenyl diphosphate from 1-deoxy-D-xylulose 5-phosphate: step 3/6. Functionally, catalyzes the phosphorylation of the position 2 hydroxy group of 4-diphosphocytidyl-2C-methyl-D-erythritol. In Xanthomonas axonopodis pv. citri (strain 306), this protein is 4-diphosphocytidyl-2-C-methyl-D-erythritol kinase.